Here is a 439-residue protein sequence, read N- to C-terminus: Omega-aminotransferase (439 aa).

112–113 (GS) contributes to the pyridoxal 5'-phosphate binding site. Position 281 is an N6-(pyridoxal phosphate)lysine (Lys-281). Thr-318 contacts pyridoxal 5'-phosphate.

This sequence belongs to the class-III pyridoxal-phosphate-dependent aminotransferase family. Homotetramer. Pyridoxal 5'-phosphate serves as cofactor.

It carries out the reaction 3-oxopropanoate + L-alanine = beta-alanine + pyruvate. It catalyses the reaction 3-aminobutanoate + pyruvate = acetoacetate + L-alanine. The enzyme catalyses benzylamine + pyruvate = benzaldehyde + L-alanine. The catalysed reaction is (S)-1-phenylethylamine + pyruvate = acetophenone + L-alanine. It carries out the reaction 2-phenylethylamine + pyruvate = 2-phenylacetaldehyde + L-alanine. It catalyses the reaction 1-phenylpropylamine + pyruvate = 1-phenylpropan-1-one + L-alanine. The enzyme catalyses 3-phenylpropylamine + pyruvate = 3-phenylpropanal + L-alanine. In terms of biological role, aminotransferase that can use beta-amino acids, aliphatic amines, or aromatic amines as amino donors, and pyruvate as amino acceptor. Shows high activity for short-chain beta-amino acids, with the highest activity for 3-aminobutanoate and beta-alanine in vitro. Displays higher activity toward aromatic amines than aliphatic amines. May be involved in beta-alanine biosynthesis and/or degradation. This chain is Omega-aminotransferase, found in Caulobacter vibrioides (strain ATCC 19089 / CIP 103742 / CB 15) (Caulobacter crescentus).